Reading from the N-terminus, the 917-residue chain is Calcium-activated chloride channel regulator 1 (917 aa).

Positions 1 to 21 are cleaved as a signal peptide; sequence MGSFRSSLFILVLHLLEGAQS. Residues 46–199 are metalloprotease domain; the sequence is DERLIQNIKD…AIRGTNVLPQ (154 aa). A Zn(2+)-binding site is contributed by H156. E157 is a catalytic residue. Residues H160 and N167 each coordinate Zn(2+). A VWFA domain is found at 306–475; the sequence is IVCLVLDKSG…NGLIDAFGAL (170 aa). Residues N503, N772, N806, N812, N838, and N893 are each glycosylated (N-linked (GlcNAc...) asparagine).

Belongs to the CLCR family. Glycosylated. Post-translationally, the translation product is autoproteolytically cleaved by the metalloprotease domain in the endoplasmic reticulum into a N-terminal and a C-terminal products that remain physically associated with each other. The cleavage is necessary for calcium-activated chloride channel (CaCC) activation activity. Expressed in ileum, trachea, and the major salivary glands. In ileum, expressed to the crypt and villus epithelia, whereas in trachea expressed in both surface epithelium and submucosal glands.

It localises to the secreted. It is found in the extracellular space. In terms of biological role, may be involved in mediating calcium-activated chloride conductance. May play critical roles in goblet cell metaplasia, mucus hypersecretion, cystic fibrosis and AHR. May be involved in the regulation of mucus production and/or secretion by goblet cells. Involved in the regulation of tissue inflammation in the innate immune response. May play a role as a tumor suppressor. Induces MUC5AC. Induces a cAMP-dependent chloride conductance possibly through effects on CFTR in colon carcinoma cells. In Sus scrofa (Pig), this protein is Calcium-activated chloride channel regulator 1 (CLCA1).